Consider the following 174-residue polypeptide: Transcription factor bHLH168 (174 aa).

Residues 14 to 63 (SLREQRNLREKERRMRMKHLFSILSSHVSPTRRLPVPQLIDQAVSYMIQL) form the bHLH domain.

This sequence belongs to the bHLH protein family.

Its subcellular location is the nucleus. This Arabidopsis thaliana (Mouse-ear cress) protein is Transcription factor bHLH168.